We begin with the raw amino-acid sequence, 245 residues long: 1-(5-phosphoribosyl)-5-[(5-phosphoribosylamino)methylideneamino] imidazole-4-carboxamide isomerase (245 aa).

Catalysis depends on Asp-8, which acts as the Proton acceptor. Residue Asp-130 is the Proton donor of the active site.

Belongs to the HisA/HisF family.

Its subcellular location is the cytoplasm. It carries out the reaction 1-(5-phospho-beta-D-ribosyl)-5-[(5-phospho-beta-D-ribosylamino)methylideneamino]imidazole-4-carboxamide = 5-[(5-phospho-1-deoxy-D-ribulos-1-ylimino)methylamino]-1-(5-phospho-beta-D-ribosyl)imidazole-4-carboxamide. Its pathway is amino-acid biosynthesis; L-histidine biosynthesis; L-histidine from 5-phospho-alpha-D-ribose 1-diphosphate: step 4/9. The sequence is that of 1-(5-phosphoribosyl)-5-[(5-phosphoribosylamino)methylideneamino] imidazole-4-carboxamide isomerase from Marinobacter nauticus (strain ATCC 700491 / DSM 11845 / VT8) (Marinobacter aquaeolei).